The chain runs to 382 residues: Pyrimidine monooxygenase RutA (382 aa).

FMN is bound by residues Ile-68–Lys-69, Asn-134, Glu-143, Arg-159–Tyr-160, and Ser-209.

Belongs to the NtaA/SnaA/DszA monooxygenase family. RutA subfamily.

It carries out the reaction uracil + FMNH2 + NADH + O2 = (Z)-3-ureidoacrylate + FMN + NAD(+) + H2O + H(+). The catalysed reaction is thymine + FMNH2 + NADH + O2 = (Z)-2-methylureidoacrylate + FMN + NAD(+) + H2O + H(+). Functionally, catalyzes the pyrimidine ring opening between N-3 and C-4 by an unusual flavin hydroperoxide-catalyzed mechanism, adding oxygen atoms in the process to yield ureidoacrylate peracid, that immediately reacts with FMN forming ureidoacrylate and FMN-N(5)-oxide. The FMN-N(5)-oxide reacts spontaneously with NADH to produce FMN. Requires the flavin reductase RutF to regenerate FMN in vivo. This is Pyrimidine monooxygenase RutA from Escherichia coli O45:K1 (strain S88 / ExPEC).